The chain runs to 161 residues: Ragulator complex protein LAMTOR1 (161 aa).

The tract at residues 1-43 is disordered; sequence MGCCYSSENEDSDQDREERKLLLDPSSPPTKALNGAEPNYHSL. Glycine 2 carries N-myristoyl glycine lipidation. Residues cysteine 3 and cysteine 4 are each lipidated (S-palmitoyl cysteine). A Glycyl lysine isopeptide (Lys-Gly) (interchain with G-Cter in ubiquitin) cross-link involves residue lysine 20. Position 27 is a phosphoserine (serine 27). A Glycyl lysine isopeptide (Lys-Gly) (interchain with G-Cter in ubiquitin) cross-link involves residue lysine 31. Serine 42 and serine 56 each carry phosphoserine. Lysine 60 participates in a covalent cross-link: Glycyl lysine isopeptide (Lys-Gly) (interchain with G-Cter in ubiquitin). Residue serine 98 is modified to Phosphoserine. Glycyl lysine isopeptide (Lys-Gly) (interchain with G-Cter in ubiquitin) cross-links involve residues lysine 103 and lysine 104. Residues 121 to 161 are interaction with LAMTOR2 and LAMTOR3; it reads SEPIPFSDLQQVSRIAAYAYSALSQIRVDAKEELVVQFGIP. Residue serine 141 is modified to Phosphoserine.

This sequence belongs to the LAMTOR1 family. As to quaternary structure, part of the Ragulator complex composed of LAMTOR1, LAMTOR2, LAMTOR3, LAMTOR4 and LAMTOR5. LAMTOR4 and LAMTOR5 form a heterodimer that interacts, through LAMTOR1, with a LAMTOR2, LAMTOR3 heterodimer. Interacts with LAMTOR2 and LAMTOR3; the interaction is direct. The Ragulator complex interacts with both the mTORC1 complex and heterodimers constituted of the Rag GTPases RagA/RRAGA, RagB/RRAGB, RagC/RRAGC and RagD/RRAGD; regulated by amino acid availability. The Ragulator complex interacts with SLC38A9; the probable amino acid sensor. Component of the lysosomal folliculin complex (LFC), composed of FLCN, FNIP1 (or FNIP2), RagA/RRAGA or RagB/RRAGB GDP-bound, RagC/RRAGC or RagD/RRAGD GTP-bound, and Ragulator. Associates with the lysosomal V-ATPase complex; interaction promotes the guanine nucleotide exchange factor (GEF) of the Ragulator complex. Interacts with MMP14. Interacts with CDKN1B; prevents the interaction of CDKN1B with RHOA leaving RHOA in a form accessible to activation by ARHGEF2. Interacts with PIP4P1. In terms of processing, N-terminal myristoylation and palmitoylation mediates its recruitment to lysosome membranes, thereby promoting localization of the Ragulator complex to lysosomes. N-myristoylation by NMT1 is required for palmitoylation at Cys-3 and Cys-4. May be palmitoylated by ZDHHC3. Post-translationally, ubiquitinated at Lys-60, Lys-103 and Lys-104 by UBE3A, promoting its degradation by the proteasome. Ubiquitination at Lys-20 impairs the association with the lysosomal V-ATPase complex. Deubiquitination at Lys-20 by USP32 promotes the association with the lysosomal V-ATPase complex and subsequent activation of the mTORC1 complex.

The protein localises to the lysosome membrane. It is found in the late endosome membrane. Functionally, key component of the Ragulator complex, a multiprotein complex involved in amino acid sensing and activation of mTORC1, a signaling complex promoting cell growth in response to growth factors, energy levels, and amino acids. Activated by amino acids through a mechanism involving the lysosomal V-ATPase, the Ragulator plays a dual role for the small GTPases Rag (RagA/RRAGA, RagB/RRAGB, RagC/RRAGC and/or RagD/RRAGD): it (1) acts as a guanine nucleotide exchange factor (GEF), activating the small GTPases Rag and (2) mediates recruitment of Rag GTPases to the lysosome membrane. Activated Ragulator and Rag GTPases function as a scaffold recruiting mTORC1 to lysosomes where it is in turn activated. LAMTOR1 is directly responsible for anchoring the Ragulator complex to the lysosomal membrane. LAMTOR1 wraps around the other subunits of the Ragulator complex to hold them in place and interacts with the Rag GTPases, thereby playing a key role in the recruitment of the mTORC1 complex to lysosomes. Also involved in the control of embryonic stem cells differentiation via non-canonical RagC/RRAGC and RagD/RRAGD activation: together with FLCN, it is necessary to recruit and activate RagC/RRAGC and RagD/RRAGD at the lysosomes, and to induce exit of embryonic stem cells from pluripotency via non-canonical, mTOR-independent TFE3 inactivation. Also required for late endosomes/lysosomes biogenesis it may regulate both the recycling of receptors through endosomes and the MAPK signaling pathway through recruitment of some of its components to late endosomes. May be involved in cholesterol homeostasis regulating LDL uptake and cholesterol release from late endosomes/lysosomes. May also play a role in RHOA activation. The sequence is that of Ragulator complex protein LAMTOR1 from Homo sapiens (Human).